The sequence spans 283 residues: 3-methyl-2-oxobutanoate hydroxymethyltransferase (283 aa).

Mg(2+) is bound by residues Asp-44 and Asp-83. 3-methyl-2-oxobutanoate is bound by residues 44–45, Asp-83, and Lys-112; that span reads DS. Glu-114 contacts Mg(2+). Catalysis depends on Glu-181, which acts as the Proton acceptor.

It belongs to the PanB family. In terms of assembly, homodecamer; pentamer of dimers. Mg(2+) serves as cofactor.

The protein localises to the cytoplasm. The enzyme catalyses 3-methyl-2-oxobutanoate + (6R)-5,10-methylene-5,6,7,8-tetrahydrofolate + H2O = 2-dehydropantoate + (6S)-5,6,7,8-tetrahydrofolate. Its pathway is cofactor biosynthesis; coenzyme A biosynthesis. Catalyzes the reversible reaction in which hydroxymethyl group from 5,10-methylenetetrahydrofolate is transferred onto alpha-ketoisovalerate to form ketopantoate. The chain is 3-methyl-2-oxobutanoate hydroxymethyltransferase from Pyrococcus furiosus (strain ATCC 43587 / DSM 3638 / JCM 8422 / Vc1).